We begin with the raw amino-acid sequence, 432 residues long: Type I restriction enzyme MjaIX specificity subunit (432 aa).

Belongs to the type-I restriction system S methylase family. The type I restriction/modification system is composed of three polypeptides R, M and S.

Functionally, the specificity (S) subunit of a type I restriction enzyme; this subunit dictates DNA sequence specificity. The M and S subunits together form a methyltransferase (MTase) that methylates A-3 on the top and A-2 on the bottom strand of the sequence 5'-CCAN(5)GTR-3'. In the presence of the R subunit the complex can also act as an endonuclease, binding to the same target sequence but cutting the DNA some distance from this site. Whether the DNA is cut or modified depends on the methylation state of the target sequence. When the target site is unmodified, the DNA is cut. When the target site is hemimethylated, the complex acts as a maintenance MTase modifying the DNA so that both strands become methylated. After locating a non-methylated recognition site, the enzyme complex serves as a molecular motor that translocates DNA in an ATP-dependent manner until a collision occurs that triggers cleavage. This Methanocaldococcus jannaschii (strain ATCC 43067 / DSM 2661 / JAL-1 / JCM 10045 / NBRC 100440) (Methanococcus jannaschii) protein is Type I restriction enzyme MjaIX specificity subunit (hsdS).